A 143-amino-acid polypeptide reads, in one-letter code: Deoxyuridine 5'-triphosphate nucleotidohydrolase (143 aa).

Substrate-binding positions include 62-64 (RSG), asparagine 75, 79-81 (TID), and lysine 89.

It belongs to the dUTPase family. Requires Mg(2+) as cofactor.

The enzyme catalyses dUTP + H2O = dUMP + diphosphate + H(+). It functions in the pathway pyrimidine metabolism; dUMP biosynthesis; dUMP from dCTP (dUTP route): step 2/2. Its function is as follows. This enzyme is involved in nucleotide metabolism: it produces dUMP, the immediate precursor of thymidine nucleotides and it decreases the intracellular concentration of dUTP so that uracil cannot be incorporated into DNA. The polypeptide is Deoxyuridine 5'-triphosphate nucleotidohydrolase (Clostridium kluyveri (strain ATCC 8527 / DSM 555 / NBRC 12016 / NCIMB 10680 / K1)).